The sequence spans 764 residues: MERAVQGTDGGGGSNSSSRSSSRATSAGSSPSCSLAGRGVSSRSAAAGLGGGGSRSSPGSVAASPSGGGGRRREPALEGVLSKYTNLLQGWQNRYFVLDFEAGILQYFVNEQSKHQKPRGVLSLSGAIVSLSDEAPHMLVVYSANGEMFKLRAADAKEKQFWVTQLRACAKYHMEMNSKSAPSSRSRSLTLLPHGTPNSASPCSQRHLSVGAPGVVTITHHKSPAAARRAKSQYSGQLHEVREMMNQVEGQQKNLVHAIESLPGSGPLTALDQDLLLLKATSAATLSCLGECLNLLQQSVHQAGQPSQKPGASENILGWHGSKSHSTEQLKNGTLGSLPSASANITWAILPNSAEDEQTSQPEPEPNSGSELVLSEDEKSDNEDKEETELGVMEDQRSIILHLISQLKLGMDLTKVVLPTFILEKRSLLEMYADFMAHPDLLLAITAGATPEERVICFVEYYLTAFHEGRKGALAKKPYNPIIGETFHCSWEVPKDRVKPKRTASRSPASCHEHPMADDPSKSYKLRFVAEQVSHHPPISCFYCECEEKRLCVNTHVWTKSKFMGMSVGVSMIGEGVLRLLEHGEEYVFTLPSAYARSILTIPWVELGGKVSINCAKTGYSATVIFHTKPFYGGKVHRVTAEVKHNPTNTIVCKAHGEWNGTLEFTYNNGETKVIDTTTLPVYPKKIRPLEKQGPMESRNLWREVTRYLRLGDIDAATEQKRHLEEKQRVEERKRENLRTPWKPKYFIQEGDGWVYFNPLWKAH.

The interval 1–74 is disordered; sequence MERAVQGTDG…PSGGGGRRRE (74 aa). 2 stretches are compositionally biased toward low complexity: residues 15-47 and 55-65; these read NSSS…SAAA and RSSPGSVAASP. Phosphoserine occurs at positions 29 and 30. The residue at position 38 (Arg-38) is an Omega-N-methylarginine. Residues Ser-57, Ser-60, and Ser-64 each carry the phosphoserine modification. A PH domain is found at 74–171; the sequence is EPALEGVLSK…WVTQLRACAK (98 aa). A Phosphothreonine modification is found at Thr-196. Residues Ser-201, Ser-209, and Ser-223 each carry the phosphoserine modification. Disordered stretches follow at residues 304–335 and 354–391; these read GQPS…NGTL and AEDE…TELG. The span at 359–370 shows a compositional bias: polar residues; that stretch reads TSQPEPEPNSGS. A compositionally biased stretch (acidic residues) spans 374–389; that stretch reads LSEDEKSDNEDKEETE. A 1,2-diacyl-sn-glycero-3-phospho-(1D-myo-inositol 4-phosphate)-binding positions include 413 to 418 and 477 to 480; these read LTKVVL and KPYN. A 1,2-diacyl-sn-glycero-3-phospho-L-serine-binding positions include 413-418 and Asn-480; that span reads LTKVVL. A disordered region spans residues 501–520; the sequence is KRTASRSPASCHEHPMADDP. Over residues 511 to 520 the composition is skewed to basic and acidic residues; sequence CHEHPMADDP. An a 1,2-diacyl-sn-glycero-3-phospho-(1D-myo-inositol 4-phosphate)-binding site is contributed by 535–536; sequence HH. Ser-561 serves as a coordination point for a 1,2-diacyl-sn-glycero-3-phospho-L-serine. Residues 713 to 740 adopt a coiled-coil conformation; sequence DIDAATEQKRHLEEKQRVEERKRENLRT. A 1,2-diacyl-sn-glycero-3-phospho-(1D-myo-inositol 4-phosphate) contacts are provided by Lys-721, Glu-725, and Arg-729.

Belongs to the OSBP family. As to quaternary structure, interacts with OSBPL9. Interacts with DIAPH1.

It localises to the cytoplasm. The protein localises to the cytoskeleton. Functionally, probable lipid transporter involved in lipid countertransport between the endoplasmic reticulum and the plasma membrane. Its ability to bind phosphatidylserine, suggests that it specifically exchanges phosphatidylserine with phosphatidylinositol 4-phosphate (PI4P), delivering phosphatidylserine to the plasma membrane in exchange for PI4P. Plays a role in negative regulation of lipid biosynthesis. Negatively regulates APOB secretion from hepatocytes. Binds cholesterol and acidic phospholipids. Also binds 25-hydroxycholesterol. Binds phosphatidylserine. In Homo sapiens (Human), this protein is Oxysterol-binding protein-related protein 10 (OSBPL10).